A 113-amino-acid chain; its full sequence is Ribonuclease P protein component (113 aa).

It belongs to the RnpA family. As to quaternary structure, consists of a catalytic RNA component (M1 or rnpB) and a protein subunit.

It carries out the reaction Endonucleolytic cleavage of RNA, removing 5'-extranucleotides from tRNA precursor.. Its function is as follows. RNaseP catalyzes the removal of the 5'-leader sequence from pre-tRNA to produce the mature 5'-terminus. It can also cleave other RNA substrates such as 4.5S RNA. The protein component plays an auxiliary but essential role in vivo by binding to the 5'-leader sequence and broadening the substrate specificity of the ribozyme. This is Ribonuclease P protein component from Finegoldia magna (strain ATCC 29328 / DSM 20472 / WAL 2508) (Peptostreptococcus magnus).